Here is a 349-residue protein sequence, read N- to C-terminus: Secretory carrier-associated membrane protein 3 (349 aa).

Residues Met-1 to Thr-90 are disordered. Over Met-1–Thr-168 the chain is Cytoplasmic. Phosphoserine is present on Ser-32. A Phosphothreonine modification is found at Thr-37. Residues Tyr-41 and Tyr-53 each carry the phosphotyrosine modification. Pro residues predominate over residues Pro-49–Ala-68. Phosphoserine occurs at positions 74 and 78. Phosphotyrosine is present on Tyr-85. Ser-87 carries the post-translational modification Phosphoserine. Transmembrane regions (helical) follow at residues Met-169–Ala-189, Gly-200–Tyr-220, Phe-236–Ile-256, and Val-277–Val-297. Topologically, residues Met-298 to Pro-349 are cytoplasmic. Lys-315 participates in a covalent cross-link: Glycyl lysine isopeptide (Lys-Gly) (interchain with G-Cter in SUMO1).

Belongs to the SCAMP family. In terms of assembly, interacts with NEDD4 and NEDD4L and TSG101. Interacts with RNF126. Post-translationally, monoubiquitinated.

The protein localises to the membrane. Functions in post-Golgi recycling pathways. Acts as a recycling carrier to the cell surface. This is Secretory carrier-associated membrane protein 3 (Scamp3) from Mus musculus (Mouse).